A 99-amino-acid polypeptide reads, in one-letter code: Small ribosomal subunit protein bS18 (99 aa).

Residues Met-1–Pro-25 show a composition bias toward basic and acidic residues. Positions Met-1–Asn-28 are disordered.

This sequence belongs to the bacterial ribosomal protein bS18 family. As to quaternary structure, part of the 30S ribosomal subunit. Forms a tight heterodimer with protein bS6.

In terms of biological role, binds as a heterodimer with protein bS6 to the central domain of the 16S rRNA, where it helps stabilize the platform of the 30S subunit. This Treponema pallidum (strain Nichols) protein is Small ribosomal subunit protein bS18.